Here is a 189-residue protein sequence, read N- to C-terminus: Lipid A acyltransferase PagP (189 aa).

An N-terminal signal peptide occupies residues Met1–Ala24. Residues His61, Asp104, and Ser105 contribute to the active site.

This sequence belongs to the lipid A palmitoyltransferase family. As to quaternary structure, homodimer.

The protein resides in the cell outer membrane. It carries out the reaction a lipid A + a 1,2-diacyl-sn-glycero-3-phosphocholine = a hepta-acyl lipid A + a 2-acyl-sn-glycero-3-phosphocholine. It catalyses the reaction a lipid IVA + a 1,2-diacyl-sn-glycero-3-phosphocholine = a lipid IVB + a 2-acyl-sn-glycero-3-phosphocholine. The enzyme catalyses a lipid IIA + a 1,2-diacyl-sn-glycero-3-phosphocholine = a lipid IIB + a 2-acyl-sn-glycero-3-phosphocholine. Its function is as follows. Transfers a fatty acid residue from the sn-1 position of a phospholipid to the N-linked hydroxyfatty acid chain on the proximal unit of lipid A or its precursors. This is Lipid A acyltransferase PagP from Klebsiella pneumoniae subsp. pneumoniae (strain ATCC 700721 / MGH 78578).